A 187-amino-acid polypeptide reads, in one-letter code: Threonylcarbamoyl-AMP synthase (187 aa).

The region spanning 4–187 (TLTLSEAVTA…DARSGHILRL (184 aa)) is the YrdC-like domain.

It belongs to the SUA5 family. TsaC subfamily.

The protein localises to the cytoplasm. It carries out the reaction L-threonine + hydrogencarbonate + ATP = L-threonylcarbamoyladenylate + diphosphate + H2O. Functionally, required for the formation of a threonylcarbamoyl group on adenosine at position 37 (t(6)A37) in tRNAs that read codons beginning with adenine. Catalyzes the conversion of L-threonine, HCO(3)(-)/CO(2) and ATP to give threonylcarbamoyl-AMP (TC-AMP) as the acyladenylate intermediate, with the release of diphosphate. The protein is Threonylcarbamoyl-AMP synthase of Xylella fastidiosa (strain M23).